The primary structure comprises 286 residues: Cytochrome c oxidase subunit 3 (286 aa).

A run of 8 helical transmembrane segments spans residues 13 to 33 (GVFLFLSYTPLYITYLLGVVI), 40 to 60 (VGTFAITLDIILCILVVCFLI), 85 to 105 (IIQYCFLWFVFSEFMLFVVFF), 133 to 153 (IILDLGYIFYWFLFDFFNIIL), 173 to 195 (LCREYLLSKIILGSSIFLGLLFI), 199 to 221 (VWEFNILIITLSVNIFCTILFSI), 223 to 243 (TLHFMHVLVGIVFMIISIFNI), and 253 to 273 (IVLIVCIIFYWHFVDIVWFFL).

It belongs to the cytochrome c oxidase subunit 3 family. Component of the cytochrome c oxidase (complex IV, CIV), a multisubunit enzyme composed of a catalytic core of 3 subunits and several supernumerary subunits. The complex exists as a monomer or a dimer and forms supercomplexes (SCs) in the inner mitochondrial membrane with ubiquinol-cytochrome c oxidoreductase (cytochrome b-c1 complex, complex III, CIII).

The protein localises to the mitochondrion inner membrane. It carries out the reaction 4 Fe(II)-[cytochrome c] + O2 + 8 H(+)(in) = 4 Fe(III)-[cytochrome c] + 2 H2O + 4 H(+)(out). Its function is as follows. Component of the cytochrome c oxidase, the last enzyme in the mitochondrial electron transport chain which drives oxidative phosphorylation. The respiratory chain contains 3 multisubunit complexes succinate dehydrogenase (complex II, CII), ubiquinol-cytochrome c oxidoreductase (cytochrome b-c1 complex, complex III, CIII) and cytochrome c oxidase (complex IV, CIV), that cooperate to transfer electrons derived from NADH and succinate to molecular oxygen, creating an electrochemical gradient over the inner membrane that drives transmembrane transport and the ATP synthase. Cytochrome c oxidase is the component of the respiratory chain that catalyzes the reduction of oxygen to water. Electrons originating from reduced cytochrome c in the intermembrane space (IMS) are transferred via the dinuclear copper A center (CU(A)) of subunit 2 and heme A of subunit 1 to the active site in subunit 1, a binuclear center (BNC) formed by heme A3 and copper B (CU(B)). The BNC reduces molecular oxygen to 2 water molecules using 4 electrons from cytochrome c in the IMS and 4 protons from the mitochondrial matrix. The protein is Cytochrome c oxidase subunit 3 (COIII) of Trypanoplasma borreli.